The primary structure comprises 237 residues: Ribonuclease PH (237 aa).

Phosphate contacts are provided by residues Arg-86 and 124–126 (GTR).

Belongs to the RNase PH family. Homohexameric ring arranged as a trimer of dimers.

It carries out the reaction tRNA(n+1) + phosphate = tRNA(n) + a ribonucleoside 5'-diphosphate. In terms of biological role, phosphorolytic 3'-5' exoribonuclease that plays an important role in tRNA 3'-end maturation. Removes nucleotide residues following the 3'-CCA terminus of tRNAs; can also add nucleotides to the ends of RNA molecules by using nucleoside diphosphates as substrates, but this may not be physiologically important. Probably plays a role in initiation of 16S rRNA degradation (leading to ribosome degradation) during starvation. This chain is Ribonuclease PH, found in Methylorubrum populi (strain ATCC BAA-705 / NCIMB 13946 / BJ001) (Methylobacterium populi).